Here is a 234-residue protein sequence, read N- to C-terminus: Exotoxin type G (234 aa).

Residues methionine 1 to alanine 24 form the signal peptide.

It belongs to the staphylococcal/streptococcal toxin family.

Its function is as follows. Mitogenic for human peripheral blood lymphocytes. The sequence is that of Exotoxin type G (speG) from Streptococcus pyogenes serotype M3 (strain ATCC BAA-595 / MGAS315).